A 265-amino-acid polypeptide reads, in one-letter code: Formyltransferase/hydrolase complex Fhc subunit C (265 aa).

It belongs to the FwdC/FmdC family. In terms of assembly, octaheteromer. Part of the formyltransferase/hydrolase complex fhc; composed of FhcA, FhcB, FhcC and FhcD.

It localises to the cytoplasm. Its pathway is one-carbon metabolism; formaldehyde degradation; formate from formaldehyde (H(4)MPT route): step 4/5. In terms of biological role, involved in the transformation of 5-formyl tetrahydromethanopterin (5-formyl-H(4)MPT) to methanofuran (MFR) and formate via the formylmethanofuran (formyl-MFR). The sequence is that of Formyltransferase/hydrolase complex Fhc subunit C (fhcC) from Methylorubrum extorquens (strain ATCC 14718 / DSM 1338 / JCM 2805 / NCIMB 9133 / AM1) (Methylobacterium extorquens).